Here is a 171-residue protein sequence, read N- to C-terminus: S-ribosylhomocysteine lyase (171 aa).

Fe cation is bound by residues histidine 54, histidine 58, and cysteine 128.

Belongs to the LuxS family. In terms of assembly, homodimer. The cofactor is Fe cation.

It catalyses the reaction S-(5-deoxy-D-ribos-5-yl)-L-homocysteine = (S)-4,5-dihydroxypentane-2,3-dione + L-homocysteine. Involved in the synthesis of autoinducer 2 (AI-2) which is secreted by bacteria and is used to communicate both the cell density and the metabolic potential of the environment. The regulation of gene expression in response to changes in cell density is called quorum sensing. Catalyzes the transformation of S-ribosylhomocysteine (RHC) to homocysteine (HC) and 4,5-dihydroxy-2,3-pentadione (DPD). This Salmonella arizonae (strain ATCC BAA-731 / CDC346-86 / RSK2980) protein is S-ribosylhomocysteine lyase.